The following is a 91-amino-acid chain: CLAVATA3/ESR (CLE)-related protein 27 (91 aa).

Positions 1 to 35 (MTHAREWRSSLTTTLLMVILLSYMLHLFCVYSRVG) are cleaved as a signal peptide. Hydroxyproline occurs at positions 83 and 86. A glycan (O-linked (Ara...) hydroxyproline) is linked at Pro86.

Belongs to the CLV3/ESR signal peptide family. The O-glycosylation (arabinosylation) of the hydroxyproline Pro-86 enhances binding affinity of the CLE27p peptide for its receptor. Mostly expressed in apex, and, to a lower extent, in roots, leaves, flowers and siliques.

It localises to the secreted. The protein resides in the extracellular space. Extracellular signal peptide that regulates cell fate. Represses root apical meristem maintenance. The protein is CLAVATA3/ESR (CLE)-related protein 27 of Arabidopsis thaliana (Mouse-ear cress).